The following is a 63-amino-acid chain: Large ribosomal subunit protein bL28 (63 aa).

The protein belongs to the bacterial ribosomal protein bL28 family.

In Clostridium kluyveri (strain NBRC 12016), this protein is Large ribosomal subunit protein bL28.